We begin with the raw amino-acid sequence, 268 residues long: MLQYPHINPVALQLGPIKIHWYGLMYLLGIFAGWYLTRYRAKVKPWAPIKPEQVGDLTFYVALGVILGGRIGYIIFYNLPYYFHNPSQMFFLWDGGMSFHGGFIGVLIAFALFARKIGANFFDLGEFVAPVIPIGLGAGRIGNFINGELWGKVTDSPLGMVFPTGGPLPRYPSQLFEFFFEGVVLFSVLWLVTIKKRPRYLVLGLFMFLYGCARFICEFFRQPDPQYGYIFFNWMTMGQILSIPMILLGAVILIAVFIKIRKNKCKNI.

4 consecutive transmembrane segments (helical) span residues 14-34 (LGPI…FAGW), 57-77 (LTFY…IIFY), 90-110 (FFLW…LIAF), and 117-137 (IGAN…IGLG). Arginine 140 provides a ligand contact to a 1,2-diacyl-sn-glycero-3-phospho-(1'-sn-glycerol). 3 consecutive transmembrane segments (helical) span residues 174–194 (QLFE…LVTI), 200–220 (YLVL…CEFF), and 240–260 (ILSI…FIKI).

The protein belongs to the Lgt family.

The protein localises to the cell inner membrane. The enzyme catalyses L-cysteinyl-[prolipoprotein] + a 1,2-diacyl-sn-glycero-3-phospho-(1'-sn-glycerol) = an S-1,2-diacyl-sn-glyceryl-L-cysteinyl-[prolipoprotein] + sn-glycerol 1-phosphate + H(+). Its pathway is protein modification; lipoprotein biosynthesis (diacylglyceryl transfer). Its function is as follows. Catalyzes the transfer of the diacylglyceryl group from phosphatidylglycerol to the sulfhydryl group of the N-terminal cysteine of a prolipoprotein, the first step in the formation of mature lipoproteins. The chain is Phosphatidylglycerol--prolipoprotein diacylglyceryl transferase from Francisella tularensis subsp. tularensis (strain FSC 198).